The following is a 655-amino-acid chain: uncharacterized protein (655 aa).

A helical membrane pass occupies residues 5 to 25 (IIIIIFIVINFINIIISSITF). Disordered regions lie at residues 337–363 (NSDYNNNNNNNNNNNNNNNNNNNNNNN) and 484–525 (DKIG…SDNS). Low complexity predominate over residues 515-524 (DNNSIGSSDN). A helical membrane pass occupies residues 588–608 (ILAVTISAIGIICVALLLTVV).

It localises to the membrane. This is an uncharacterized protein from Dictyostelium discoideum (Social amoeba).